The following is a 342-amino-acid chain: Holliday junction branch migration complex subunit RuvB (342 aa).

The segment at 1–184 (MEEDFNIRDH…FGINLHLEYY (184 aa)) is large ATPase domain (RuvB-L). ATP contacts are provided by residues L23, R24, G65, K68, T69, T70, 131–133 (EDY), R174, Y184, and R221. Position 69 (T69) interacts with Mg(2+). Residues 185-255 (DDDILSNIIS…IANYALEALN (71 aa)) are small ATPAse domain (RuvB-S). Residues 258–342 (KYGLDEIDNK…YNSQKTLFND (85 aa)) are head domain (RuvB-H). Residues R313 and R318 each coordinate DNA.

The protein belongs to the RuvB family. Homohexamer. Forms an RuvA(8)-RuvB(12)-Holliday junction (HJ) complex. HJ DNA is sandwiched between 2 RuvA tetramers; dsDNA enters through RuvA and exits via RuvB. An RuvB hexamer assembles on each DNA strand where it exits the tetramer. Each RuvB hexamer is contacted by two RuvA subunits (via domain III) on 2 adjacent RuvB subunits; this complex drives branch migration. In the full resolvosome a probable DNA-RuvA(4)-RuvB(12)-RuvC(2) complex forms which resolves the HJ.

The protein resides in the cytoplasm. It carries out the reaction ATP + H2O = ADP + phosphate + H(+). Functionally, the RuvA-RuvB-RuvC complex processes Holliday junction (HJ) DNA during genetic recombination and DNA repair, while the RuvA-RuvB complex plays an important role in the rescue of blocked DNA replication forks via replication fork reversal (RFR). RuvA specifically binds to HJ cruciform DNA, conferring on it an open structure. The RuvB hexamer acts as an ATP-dependent pump, pulling dsDNA into and through the RuvAB complex. RuvB forms 2 homohexamers on either side of HJ DNA bound by 1 or 2 RuvA tetramers; 4 subunits per hexamer contact DNA at a time. Coordinated motions by a converter formed by DNA-disengaged RuvB subunits stimulates ATP hydrolysis and nucleotide exchange. Immobilization of the converter enables RuvB to convert the ATP-contained energy into a lever motion, pulling 2 nucleotides of DNA out of the RuvA tetramer per ATP hydrolyzed, thus driving DNA branch migration. The RuvB motors rotate together with the DNA substrate, which together with the progressing nucleotide cycle form the mechanistic basis for DNA recombination by continuous HJ branch migration. Branch migration allows RuvC to scan DNA until it finds its consensus sequence, where it cleaves and resolves cruciform DNA. This Bacteroides fragilis (strain ATCC 25285 / DSM 2151 / CCUG 4856 / JCM 11019 / LMG 10263 / NCTC 9343 / Onslow / VPI 2553 / EN-2) protein is Holliday junction branch migration complex subunit RuvB.